Consider the following 359-residue polypeptide: Gap junction alpha-5 protein (359 aa).

Over 1 to 19 (MGDWSFLGEFLEEVHKHST) the chain is Cytoplasmic. A helical membrane pass occupies residues 20–40 (VIGKVWLTVLFIFRMLVLGTA). Residues 41 to 76 (AESSWGDEQADFLCDTMQPGCENVCYDQAFPISHIR) lie on the Extracellular side of the membrane. The helical transmembrane segment at 77 to 97 (YWVLQVIFVSTPSLVYLGHAV) threads the bilayer. Residues 98-165 (HMVRVQEKRK…CSILIRTTME (68 aa)) are Cytoplasmic-facing. The helical transmembrane segment at 166 to 186 (VAFIVGQYLLYGVFLDTLHVC) threads the bilayer. The Extracellular segment spans residues 187–206 (RRSPCPHPVNCYVSRPTEKN). Residues 207-227 (VFIVFMLAVAGLSLFLSLAEL) traverse the membrane as a helical segment. The Cytoplasmic portion of the chain corresponds to 228–359 (YHLGWKKIRQ…SKARSDDLSV (132 aa)). Disordered regions lie at residues 285-305 (SNKM…VRSQ) and 317-359 (RYAQ…DLSV). 2 positions are modified to phosphoserine: Ser-354 and Ser-358.

The protein belongs to the connexin family. Alpha-type (group II) subfamily. In terms of assembly, a connexon is composed of a hexamer of connexins.

It is found in the cell membrane. The protein localises to the cell junction. Its subcellular location is the gap junction. Functionally, one gap junction consists of a cluster of closely packed pairs of transmembrane channels, the connexons, through which materials of low MW diffuse from one cell to a neighboring cell. The polypeptide is Gap junction alpha-5 protein (GJA5) (Bos taurus (Bovine)).